Consider the following 79-residue polypeptide: Putative defensin-like protein 29 (79 aa).

An N-terminal signal peptide occupies residues Met1–Ala26. 3 cysteine pairs are disulfide-bonded: Cys45/Cys65, Cys51/Cys74, and Cys55/Cys76.

The protein belongs to the DEFL family.

Its subcellular location is the secreted. This chain is Putative defensin-like protein 29, found in Arabidopsis thaliana (Mouse-ear cress).